Consider the following 131-residue polypeptide: Class I hydrophobin POH2 (131 aa).

A signal peptide spans 1 to 21 (MFFRTSSLFTTIVAFTVMAAA). 4 disulfides stabilise this stretch: C50/C110, C57/C104, C58/C91, and C111/C124. Residues N115 and N128 are each glycosylated (N-linked (GlcNAc...) asparagine).

This sequence belongs to the fungal hydrophobin family. As to quaternary structure, self-assembles to form functional amyloid fibrils called rodlets. Self-assembly into fibrillar rodlets occurs spontaneously at hydrophobic:hydrophilic interfaces and the rodlets further associate laterally to form amphipathic monolayers. In terms of tissue distribution, expressionn is switched off in the fruiting bodies but abundantly expressed in the vegetative mycelium of both monokaryon and dikaryon.

Its subcellular location is the secreted. It localises to the cell wall. Functionally, aerial growth, conidiation, and dispersal of filamentous fungi in the environment rely upon a capability of their secreting small amphipathic proteins called hydrophobins (HPBs) with low sequence identity. Class I can self-assemble into an outermost layer of rodlet bundles on aerial cell surfaces, conferring cellular hydrophobicity that supports fungal growth, development and dispersal; whereas Class II form highly ordered films at water-air interfaces through intermolecular interactions but contribute nothing to the rodlet structure. POH2 is a class I hydrophobin that causes a large drop in the water-surface tension, enabling hyphae to breach the interface and grow into the air, in both the primary and the secondary mycelium. In the latter mycelium POH2 maight also play a role in the emergence of fruiting bodies. Secreted POH2 could also play a role in facilitating lignin degradation. The sequence is that of Class I hydrophobin POH2 from Pleurotus ostreatus (Oyster mushroom).